A 396-amino-acid polypeptide reads, in one-letter code: Elongation factor Tu 2 (396 aa).

The tr-type G domain maps to 10-206 (KPHCNIGTIG…TVDAYIPQPD (197 aa)). Positions 19-26 (GHVDHGKT) are G1. 19-26 (GHVDHGKT) lines the GTP pocket. T26 serves as a coordination point for Mg(2+). Residues 60-64 (GITIN) are G2. The segment at 81–84 (DCPG) is G3. Residues 81–85 (DCPGH) and 136–139 (NKVD) contribute to the GTP site. A G4 region spans residues 136–139 (NKVD). The interval 174-176 (SAK) is G5.

The protein belongs to the TRAFAC class translation factor GTPase superfamily. Classic translation factor GTPase family. EF-Tu/EF-1A subfamily. As to quaternary structure, monomer.

It localises to the cytoplasm. The enzyme catalyses GTP + H2O = GDP + phosphate + H(+). Its function is as follows. GTP hydrolase that promotes the GTP-dependent binding of aminoacyl-tRNA to the A-site of ribosomes during protein biosynthesis. The chain is Elongation factor Tu 2 from Caulobacter sp. (strain K31).